We begin with the raw amino-acid sequence, 67 residues long: Conotoxin mr3d (67 aa).

An N-terminal signal peptide occupies residues Met1–Ala19. Residues Val20–Arg52 constitute a propeptide that is removed on maturation. Cystine bridges form between Cys53–Cys65, Cys54–Cys62, and Cys58–Cys66. A 4-hydroxyproline; partial modification is found at Pro64. Cys66 bears the Cysteine amide; partial mark.

The protein belongs to the conotoxin M superfamily. Post-translationally, has been found to be hydroxylated and amidated by Han et al. (2006), and to be unmodified by Ju et al. (2022). Expressed by the venom duct.

The protein localises to the secreted. The sequence is that of Conotoxin mr3d from Conus marmoreus (Marble cone).